The following is a 513-amino-acid chain: MSDDNRVYIFDTTLRDGEQSPGATMTREEKVRMARQLETLGVDIIEAGFPAASEGDFQAVSAIAAAVKTPVVAALCRALASDIDRGFEAIKGAQRRRIHTFLATSELHMQHKLNKTPTQVLDMIEAAVSHAASKGVEVQFSAEDASRSEPAFLVAACERAINAGATILNIPDTVGYAQPAEFAELIRHLMTTVRGAGGVTFAVHCHNDLGLAVANTLAALHAGARQAEVTLSGIGERAGNASLEQVVMGLNTRPNYYNLTTGIVTEELFPSCRRLSGIIGQPIPPYAPIMGRNAFAHESGIHQHGVLKDRRTYEIMTAESIGRKGAVVVLGKHSGRHALDAKVKELGYALNDEELLVVFVAVKQLADRKQRILDEDIEALILEKVLRRPDRYALQFLSVHCGNVELAPFAVVEMQVEGQTVRHYSAGSGPVDAVFNAVCQAVGRKPDLEEYQINAITGGTDAQGEVTVRIKDGTATTVGRGVHDDVIMASTLAFINALNRLAKKEEERTCPQL.

The Pyruvate carboxyltransferase domain occupies 7–269; that stretch reads VYIFDTTLRD…TTGIVTEELF (263 aa). Mn(2+) is bound by residues D16, H204, H206, and N240. A regulatory domain region spans residues 393-513; the sequence is ALQFLSVHCG…KEEERTCPQL (121 aa).

Belongs to the alpha-IPM synthase/homocitrate synthase family. LeuA type 1 subfamily. In terms of assembly, homodimer. Requires Mn(2+) as cofactor.

The protein localises to the cytoplasm. It carries out the reaction 3-methyl-2-oxobutanoate + acetyl-CoA + H2O = (2S)-2-isopropylmalate + CoA + H(+). The protein operates within amino-acid biosynthesis; L-leucine biosynthesis; L-leucine from 3-methyl-2-oxobutanoate: step 1/4. Its function is as follows. Catalyzes the condensation of the acetyl group of acetyl-CoA with 3-methyl-2-oxobutanoate (2-ketoisovalerate) to form 3-carboxy-3-hydroxy-4-methylpentanoate (2-isopropylmalate). The protein is 2-isopropylmalate synthase of Solidesulfovibrio magneticus (strain ATCC 700980 / DSM 13731 / RS-1) (Desulfovibrio magneticus).